We begin with the raw amino-acid sequence, 741 residues long: Moderate conductance mechanosensitive channel YbiO (741 aa).

A signal peptide spans 1–18 (MRWILFILFCLLGAPAHA). A disordered region spans residues 22–42 (PGVTTTTTTDSTTEPAPEPDI). A compositionally biased stretch (low complexity) spans 25 to 34 (TTTTTTDSTT). Helical transmembrane passes span 143–163 (MLAV…LPLY), 185–205 (AMII…LFVG), 225–245 (LFLN…LIFC), 268–288 (LSWL…IISN), 294–314 (IGAL…LYLI), 343–363 (FALV…FFSL), 372–392 (FMMG…FVSG), 432–452 (ILTV…FDFW), 466–486 (ILIR…VLAS), 509–529 (LLTL…IMIV), and 533–553 (IGVN…AISF).

It belongs to the MscS (TC 1.A.23) family. As to quaternary structure, homoheptamer.

The protein localises to the cell inner membrane. Mechanosensitive channel that protects cells against hypoosmotic stress when highly overexpressed. The sequence is that of Moderate conductance mechanosensitive channel YbiO (ybiO) from Escherichia coli (strain K12).